Reading from the N-terminus, the 658-residue chain is MRGCLQTVRWLTSAWQRPPSYPPLSRAAPCRFFNVSIPRNAQSRKPVSDLERRIAAIPIDRFRNFCIVAHVDHGKSTLSDRLLELTGTIQPGGNKQVLDKLDVERERGITVKAQTCTMLYNYRGEDYLLHLVDTPGHVDFRAEVSRSYASCGGALLLVDASQGVQAQTVANFYLAFAEGLKLVPVINKVDLPSADPVRALDQMANTFELDPKTAVLVSAKTGLNVEQLLPTVVEQIPAPVGDHTKPLRMLLVDSWYSTYKGVILLVRIFDGEVRAGDHVGSLATGLKYHVGEVGIMYPGQTAQSVLRAGQVGYIYFNPAMKRSQEAKVGDTYTKVGSEKLIEPLPGFEEPKSMVFVAAYPVDASDFPHLEDSINQLLLNDRSITLQKESSEALGAGFRLGFLGTLHCSVFEDRLRQEHGASIIITPPTVPFKVIWKDGKEEIITNPALFPEEDALRAKVVELQEPFVLATLTFPEEYLGRVIELCESNRGEQKSLEFFTATQVILKYELPLAQLVDDFFGKLKGSTKGYASLDYEESGWRRSSIAKLQLLVNKVPVDAVSRVVHSSQVQKLGRVWVSKFKEHVDRQMFEVVIQAAVGRNIVARETIKPFRKDVLQKLHAADVTRRRKLLEKQKEGRKKLKAVGNVVIEHKAFQAFLAK.

The transit peptide at 1–40 directs the protein to the mitochondrion; that stretch reads MRGCLQTVRWLTSAWQRPPSYPPLSRAAPCRFFNVSIPRN. The 181-residue stretch at 60 to 240 folds into the tr-type G domain; it reads DRFRNFCIVA…TVVEQIPAPV (181 aa). GTP-binding positions include 69-76, 133-137, and 187-190; these read AHVDHGKS, DTPGH, and NKVD.

Belongs to the TRAFAC class translation factor GTPase superfamily. Classic translation factor GTPase family. LepA subfamily.

It is found in the mitochondrion inner membrane. The catalysed reaction is GTP + H2O = GDP + phosphate + H(+). Promotes mitochondrial protein synthesis. May act as a fidelity factor of the translation reaction, by catalyzing a one-codon backward translocation of tRNAs on improperly translocated ribosomes. Binds to mitochondrial ribosomes in a GTP-dependent manner. This is Translation factor GUF1, mitochondrial from Paracoccidioides brasiliensis (strain Pb03).